A 347-amino-acid polypeptide reads, in one-letter code: Lipoyl synthase (347 aa).

Residues Cys-55, Cys-60, Cys-66, Cys-81, Cys-85, Cys-88, and Ser-292 each contribute to the [4Fe-4S] cluster site. The region spanning 67-281 (WEDREASFLI…SEAAYDMGFP (215 aa)) is the Radical SAM core domain.

The protein belongs to the radical SAM superfamily. Lipoyl synthase family. It depends on [4Fe-4S] cluster as a cofactor.

It is found in the cytoplasm. The enzyme catalyses [[Fe-S] cluster scaffold protein carrying a second [4Fe-4S](2+) cluster] + N(6)-octanoyl-L-lysyl-[protein] + 2 oxidized [2Fe-2S]-[ferredoxin] + 2 S-adenosyl-L-methionine + 4 H(+) = [[Fe-S] cluster scaffold protein] + N(6)-[(R)-dihydrolipoyl]-L-lysyl-[protein] + 4 Fe(3+) + 2 hydrogen sulfide + 2 5'-deoxyadenosine + 2 L-methionine + 2 reduced [2Fe-2S]-[ferredoxin]. It participates in protein modification; protein lipoylation via endogenous pathway; protein N(6)-(lipoyl)lysine from octanoyl-[acyl-carrier-protein]: step 2/2. Its function is as follows. Catalyzes the radical-mediated insertion of two sulfur atoms into the C-6 and C-8 positions of the octanoyl moiety bound to the lipoyl domains of lipoate-dependent enzymes, thereby converting the octanoylated domains into lipoylated derivatives. This is Lipoyl synthase from Corynebacterium urealyticum (strain ATCC 43042 / DSM 7109).